Reading from the N-terminus, the 264-residue chain is Virulence plasmid protein pGP3-D (264 aa).

This is Virulence plasmid protein pGP3-D from Chlamydia psittaci (Chlamydophila psittaci).